Here is a 352-residue protein sequence, read N- to C-terminus: MTQNDSMAELKQQALVDINEAQNERELQDVKVKYLGKKGSVSGLMKNMKDLPNEEKPAYGQKVNELRQTIQKELDEKQELLKNEKLNQQLAEETIDVTLPSRQISIGSKHPLTRTVEEIEDLFLGLGYEIVDGYEVEQDYYNFEALNLPKSHPARDMQDSFYITDEILMRTHTSPVQARTMEKRNGQGPVKIICPGKVYRRDSDDATHSHQFTQIEGLVVDKNIKMSDLKGTLELVAKKLFGADREIRLRPSYFPFTEPSVEVDVSCFKCKGKGCNVCKHTGWIEILGAGMVHPNVLEMAGFDSNEYSGFAFGMGPDRIAMLKYGIEDIRYFYTNDVRFLEQFKAVEDRGEA.

Position 258 (Glu-258) interacts with Mg(2+).

Belongs to the class-II aminoacyl-tRNA synthetase family. Phe-tRNA synthetase alpha subunit type 1 subfamily. As to quaternary structure, tetramer of two alpha and two beta subunits. It depends on Mg(2+) as a cofactor.

It is found in the cytoplasm. It catalyses the reaction tRNA(Phe) + L-phenylalanine + ATP = L-phenylalanyl-tRNA(Phe) + AMP + diphosphate + H(+). The protein is Phenylalanine--tRNA ligase alpha subunit of Staphylococcus haemolyticus (strain JCSC1435).